Consider the following 612-residue polypeptide: Cytoplasmic dynein 1 intermediate chain 2 (612 aa).

2 stretches are compositionally biased toward basic and acidic residues: residues 1 to 13 (MSDK…ELER) and 20 to 43 (QIRE…KKEA). 2 disordered regions span residues 1-117 (MSDK…MAKI) and 129-188 (TYTK…EEKQ). Position 2 is an N-acetylserine (serine 2). Serine 51 carries the post-translational modification Diphosphoserine. Residues serine 51 and serine 84 each carry the phosphoserine modification. A compositionally biased stretch (low complexity) spans 82–91 (PSSKSVSTPS). Threonine 89 carries the phosphothreonine modification. Phosphoserine is present on residues serine 91, serine 95, and serine 98. Over residues 164-188 (EKTLKKDEESDSKAPPHELTEEEKQ) the composition is skewed to basic and acidic residues. 7 WD repeats span residues 251-300 (SKHR…TTPE), 304-344 (HCQS…RTPV), 353-394 (AHTH…HPQD), 403-443 (SKAV…AGIS), 448-493 (GHQG…PLYS), 496-536 (DNSD…EVPT), and 542-581 (EGNP…AVPR).

Belongs to the dynein intermediate chain family. In terms of assembly, homodimer. The cytoplasmic dynein 1 complex consists of two catalytic heavy chains (HCs) and a number of non-catalytic subunits presented by intermediate chains (ICs), light intermediate chains (LICs) and light chains (LCs); the composition seems to vary in respect to the IC, LIC and LC composition. The heavy chain homodimer serves as a scaffold for the probable homodimeric assembly of the respective non-catalytic subunits. The ICs and LICs bind directly to the HC dimer and the LCs assemble on the IC dimer. Interacts with DYNLT3. Interacts with DYNLT1. Interacts (dephosphorylated at Ser-84) with DCTN1. Interacts with BICD2. Interacts with SPEF2. Interacts with CFAP61. In terms of processing, the phosphorylation status of Ser-84 appears to be involved in dynactin-dependent target binding. Pyrophosphorylation by 5-diphosphoinositol pentakisphosphate (5-IP7) promotes interaction with DCTN1. Serine pyrophosphorylation is achieved by Mg(2+)-dependent, but enzyme independent transfer of a beta-phosphate from a inositol pyrophosphate to a pre-phosphorylated serine residue.

Its subcellular location is the cytoplasm. It localises to the cytoskeleton. In terms of biological role, acts as one of several non-catalytic accessory components of the cytoplasmic dynein 1 complex that are thought to be involved in linking dynein to cargos and to adapter proteins that regulate dynein function. Cytoplasmic dynein 1 acts as a motor for the intracellular retrograde motility of vesicles and organelles along microtubules. The intermediate chains mediate the binding of dynein to dynactin via its 150 kDa component (p150-glued) DCTN1. Involved in membrane-transport, such as Golgi apparatus, late endosomes and lysosomes. The protein is Cytoplasmic dynein 1 intermediate chain 2 (DYNC1I2) of Bos taurus (Bovine).